The chain runs to 69 residues: DNA gyrase inhibitor YacG (69 aa).

Cys14, Cys17, Cys33, and Cys37 together coordinate Zn(2+). The tract at residues 46 to 69 is disordered; it reads ADEEKSIPGAPDMSDSDGWSEDQY. Residues 59–69 are compositionally biased toward acidic residues; it reads SDSDGWSEDQY.

This sequence belongs to the DNA gyrase inhibitor YacG family. In terms of assembly, interacts with GyrB. Zn(2+) is required as a cofactor.

Its function is as follows. Inhibits all the catalytic activities of DNA gyrase by preventing its interaction with DNA. Acts by binding directly to the C-terminal domain of GyrB, which probably disrupts DNA binding by the gyrase. The protein is DNA gyrase inhibitor YacG of Aliivibrio fischeri (strain MJ11) (Vibrio fischeri).